A 661-amino-acid chain; its full sequence is Acetyl-coenzyme A synthetase (661 aa).

CoA contacts are provided by residues 197–200 (RGGK) and threonine 320. ATP contacts are provided by residues 396–398 (GEP), 420–425 (DTWWQT), aspartate 511, and arginine 526. Serine 534 lines the CoA pocket. Arginine 537 contacts ATP. Residues valine 548 and valine 553 each contribute to the Mg(2+) site. An N6-acetyllysine modification is found at lysine 620.

Belongs to the ATP-dependent AMP-binding enzyme family. Mg(2+) is required as a cofactor. In terms of processing, acetylated. Deacetylation by the SIR2-homolog deacetylase activates the enzyme.

It catalyses the reaction acetate + ATP + CoA = acetyl-CoA + AMP + diphosphate. Functionally, catalyzes the conversion of acetate into acetyl-CoA (AcCoA), an essential intermediate at the junction of anabolic and catabolic pathways. AcsA undergoes a two-step reaction. In the first half reaction, AcsA combines acetate with ATP to form acetyl-adenylate (AcAMP) intermediate. In the second half reaction, it can then transfer the acetyl group from AcAMP to the sulfhydryl group of CoA, forming the product AcCoA. The chain is Acetyl-coenzyme A synthetase from Leptospira interrogans serogroup Icterohaemorrhagiae serovar copenhageni (strain Fiocruz L1-130).